The sequence spans 464 residues: Kynureninase 2 (464 aa).

Pyridoxal 5'-phosphate contacts are provided by residues leucine 135, threonine 136, 163 to 166, aspartate 248, histidine 251, and tyrosine 273; that span reads FPSD. Lysine 274 is modified (N6-(pyridoxal phosphate)lysine). Residues tryptophan 313 and asparagine 341 each coordinate pyridoxal 5'-phosphate.

The protein belongs to the kynureninase family. Homodimer. The cofactor is pyridoxal 5'-phosphate.

The protein resides in the cytoplasm. It carries out the reaction L-kynurenine + H2O = anthranilate + L-alanine + H(+). The enzyme catalyses 3-hydroxy-L-kynurenine + H2O = 3-hydroxyanthranilate + L-alanine + H(+). The protein operates within amino-acid degradation; L-kynurenine degradation; L-alanine and anthranilate from L-kynurenine: step 1/1. It participates in cofactor biosynthesis; NAD(+) biosynthesis; quinolinate from L-kynurenine: step 2/3. Catalyzes the cleavage of L-kynurenine (L-Kyn) and L-3-hydroxykynurenine (L-3OHKyn) into anthranilic acid (AA) and 3-hydroxyanthranilic acid (3-OHAA), respectively. This Aspergillus fumigatus (strain CBS 144.89 / FGSC A1163 / CEA10) (Neosartorya fumigata) protein is Kynureninase 2 (bna5-2).